The following is a 312-amino-acid chain: Phosphate system positive regulatory protein PHO4 (312 aa).

An interaction with PHO80 region spans residues 1–31 (MGRTTSEGIHGFVDDLEPKSSILDKVGDFIT). The tract at residues 35 to 71 (KRHDGREDFNEQNDELNSQENHNSSENGNENENEQDS) is disordered. The span at 49–62 (ELNSQENHNSSENG) shows a compositional bias: low complexity. Residues 75 to 83 (DDLDRAFEL) carry the 9aaTAD motif. Residues 75-99 (DDLDRAFELVEGMDMDWMMPSHAHH) form a transcription activation domain region. Phosphoserine; by PHO85 occurs at positions 100, 114, 128, and 152. Polar residues-rich tracts occupy residues 138–154 (TTSA…SSPY) and 196–210 (PSNS…TAKT). Residues 138–259 (TTSANKVTKN…DKRESHKHAE (122 aa)) are disordered. The Nuclear localization signal motif lies at 140–166 (SANKVTKNKSNSSPYLNKRRGKPGPDS). The interaction with PHO80 stretch occupies residues 156 to 200 (NKRRGKPGPDSATSLFELPDSVIPTPKPKPKPKQYPKVILPSNST). An interaction with PHO2 region spans residues 201–218 (RRVSPVTAKTSSSAEGVV). An involved in oligomerization region spans residues 203–227 (VSPVTAKTSSSAEGVVVASESPVIA). Phosphoserine is present on serine 204. A compositionally biased stretch (low complexity) spans 211 to 235 (SSSAEGVVVASESPVIAPHGSSHSR). Serine 223 carries the post-translational modification Phosphoserine; by PHO85. A phosphoserine mark is found at serine 242 and serine 243. Over residues 248-259 (DDDKRESHKHAE) the composition is skewed to basic and acidic residues. The region spanning 250–306 (DKRESHKHAEQARRNRLAVALHELASLIPAEWKQQNVSAAPSKATTVEAACRYIRHL) is the bHLH domain.

In terms of assembly, binds DNA as a homodimer. Interacts with transcription factor PHO2 and binds cooperatively to PHO5 UAS. Interacts with the cyclin-CDK PHO80-PHO85 and the CDK inhibitor (CKI) PHO81. Post-translationally, phosphorylated by the cyclin-CDK PHO80-PHO85 at five residues under high-phosphate conditions, preventing PHO4 from activating the structural PHO genes. Phosphorylation of Ser-114 and Ser-128 promotes nuclear export. Phosphorylation of Ser-152 decreases nuclear import. Phosphorylation of Ser-223 decreases the binding affinity for PHO2.

It localises to the cytoplasm. It is found in the nucleus. Functionally, transcriptional activator that regulates the expression of repressible phosphatase under phosphate starvation conditions. Binds to the upstream activating sequence (UAS) of several phosphatase encoding PHO genes. Inhibited by the cyclin-CDK PHO80-PHO85 under high-phosphate conditions. The protein is Phosphate system positive regulatory protein PHO4 (PHO4) of Saccharomyces cerevisiae (strain ATCC 204508 / S288c) (Baker's yeast).